A 481-amino-acid chain; its full sequence is uncharacterized protein (481 aa).

Helical transmembrane passes span 14 to 34, 46 to 66, 90 to 110, 134 to 154, 167 to 187, 218 to 238, 258 to 278, 303 to 323, 377 to 397, 411 to 431, and 446 to 466; these read LGFC…GIFL, FAPM…IVFA, IGIY…GVLA, FSVK…INLF, TVGK…IITT, FSSM…FESI, IAIF…MLLG, IIVV…SFGA, LAVI…IALA, AFTD…LAVS, and YFSI…AYLH.

It belongs to the amino acid-polyamine-organocation (APC) superfamily.

The protein localises to the cell membrane. Its function is as follows. Probable amino-acid or metabolite transport protein. This is an uncharacterized protein from Mycobacterium tuberculosis (strain CDC 1551 / Oshkosh).